Reading from the N-terminus, the 410-residue chain is Arginine deiminase (410 aa).

The Amidino-cysteine intermediate role is filled by cysteine 400.

This sequence belongs to the arginine deiminase family.

It localises to the cytoplasm. It catalyses the reaction L-arginine + H2O = L-citrulline + NH4(+). The protein operates within amino-acid degradation; L-arginine degradation via ADI pathway; carbamoyl phosphate from L-arginine: step 1/2. The polypeptide is Arginine deiminase (Bacillus cereus (strain G9842)).